Reading from the N-terminus, the 288-residue chain is Elongation factor Ts (288 aa).

Positions threonine 79–valine 82 are involved in Mg(2+) ion dislocation from EF-Tu.

Belongs to the EF-Ts family.

Its subcellular location is the cytoplasm. In terms of biological role, associates with the EF-Tu.GDP complex and induces the exchange of GDP to GTP. It remains bound to the aminoacyl-tRNA.EF-Tu.GTP complex up to the GTP hydrolysis stage on the ribosome. The sequence is that of Elongation factor Ts from Ehrlichia ruminantium (strain Gardel).